The sequence spans 1311 residues: Protein PARALOG OF AIPP2 (1311 aa).

Disordered stretches follow at residues M1 to S21, I114 to S141, and G178 to E280. A compositionally biased stretch (basic and acidic residues) spans N213–P240. Over residues S258 to E270 the composition is skewed to low complexity. A PHD-type zinc finger spans residues V283–E334. Zn(2+) is bound by residues C286, C289, C301, C304, H310, C313, C328, and C331. A coiled-coil region spans residues C328–T348. Disordered stretches follow at residues P369–R390, N411–S440, H460–N701, T975–K1050, E1059–L1078, E1087–N1138, N1152–K1186, and L1249–R1311. The span at N411 to Q431 shows a compositional bias: polar residues. A compositionally biased stretch (basic and acidic residues) spans H460–L472. Residues P487–Q502 are compositionally biased toward polar residues. The span at H512 to E528 shows a compositional bias: basic and acidic residues. Positions A529–N552 are enriched in polar residues. Residues N553–R566 show a composition bias toward basic and acidic residues. Residues L569 to A607 are compositionally biased toward polar residues. The segment covering V640–S653 has biased composition (basic and acidic residues). 3 stretches are compositionally biased toward polar residues: residues P668–K694, P977–V988, and L1014–R1025. A compositionally biased stretch (basic and acidic residues) spans N1026–K1050. Over residues E1087 to L1096 the composition is skewed to basic and acidic residues. Residues S1250–M1263 are compositionally biased toward polar residues. Residues G1256 to D1276 adopt a coiled-coil conformation. The span at V1280–S1289 shows a compositional bias: low complexity.

Part of the BAH-PHD bivalent histone reader complex that contains AIPP2, PAIPP2 and AIPP3/BDT1; the BAH-PHD module associates with CPL2 to form the BAH-PHD-CPL2 complex (BPC) for transcriptional repression. Binds directly to AIPP3/BDT1 and CPL2, but not to AIPP2. Expressed ubiquitously.

Functionally, together with AIPP2 and AIPP3/BDT1, cooperates to form a BAH-PHD bivalent histone reader complex able to read histone H3 lysine 27 trimethylation (H3K27me3) and low-methylated H3K4 histone marks in order to regulate transcription, especially to prevent early flowering; promotes AIPP3/BDT1 binding to H3K27me3. CPL2 is subsequently recruited to form a BAH-PHD-CPL2 complex (BPC) in order to silence several H3K27me3 and low-methylated H3K4 enriched loci, including AGO5, via the phosphorylation state-dependent inhibition of Pol II release from the transcriptional start site (e.g. Ser5P-Pol II dephosphorylation). The BPC complex represses flowering by inhibiting the expression of several genes, including AGL6, FT, FUL and SOC1. The polypeptide is Protein PARALOG OF AIPP2 (Arabidopsis thaliana (Mouse-ear cress)).